Reading from the N-terminus, the 418-residue chain is Coenzyme A biosynthesis bifunctional protein CoaBC (418 aa).

The tract at residues 1–195 is phosphopantothenoylcysteine decarboxylase; sequence MVDHKRIPKQ…ALPYDLAGRK (195 aa). The phosphopantothenate--cysteine ligase stretch occupies residues 196–418; that stretch reads LLVTAGGTRE…IVTFLAGCSS (223 aa). CTP contacts are provided by Asp-285, Lys-295, Phe-336, Lys-354, and Lys-358.

The protein in the N-terminal section; belongs to the HFCD (homo-oligomeric flavin containing Cys decarboxylase) superfamily. This sequence in the C-terminal section; belongs to the PPC synthetase family. It depends on Mg(2+) as a cofactor. Requires FMN as cofactor.

The enzyme catalyses N-[(R)-4-phosphopantothenoyl]-L-cysteine + H(+) = (R)-4'-phosphopantetheine + CO2. It catalyses the reaction (R)-4'-phosphopantothenate + L-cysteine + CTP = N-[(R)-4-phosphopantothenoyl]-L-cysteine + CMP + diphosphate + H(+). It functions in the pathway cofactor biosynthesis; coenzyme A biosynthesis; CoA from (R)-pantothenate: step 2/5. The protein operates within cofactor biosynthesis; coenzyme A biosynthesis; CoA from (R)-pantothenate: step 3/5. Functionally, catalyzes two sequential steps in the biosynthesis of coenzyme A. In the first step cysteine is conjugated to 4'-phosphopantothenate to form 4-phosphopantothenoylcysteine. In the second step the latter compound is decarboxylated to form 4'-phosphopantotheine. The polypeptide is Coenzyme A biosynthesis bifunctional protein CoaBC (Mycobacterium bovis (strain ATCC BAA-935 / AF2122/97)).